A 344-amino-acid polypeptide reads, in one-letter code: Heat-inducible transcription repressor HrcA (344 aa).

The protein belongs to the HrcA family.

In terms of biological role, negative regulator of class I heat shock genes (grpE-dnaK-dnaJ and groELS operons). Prevents heat-shock induction of these operons. This is Heat-inducible transcription repressor HrcA from Streptococcus pneumoniae (strain P1031).